A 331-amino-acid polypeptide reads, in one-letter code: Glycerol-3-phosphate dehydrogenase [NAD(P)+] (331 aa).

Residues W14, R34, and K107 each coordinate NADPH. 3 residues coordinate sn-glycerol 3-phosphate: K107, G135, and S137. A139 provides a ligand contact to NADPH. Sn-glycerol 3-phosphate-binding residues include K190, D243, S253, R254, and N255. The Proton acceptor role is filled by K190. Position 254 (R254) interacts with NADPH. Residues V278 and E280 each coordinate NADPH.

This sequence belongs to the NAD-dependent glycerol-3-phosphate dehydrogenase family.

Its subcellular location is the cytoplasm. It catalyses the reaction sn-glycerol 3-phosphate + NAD(+) = dihydroxyacetone phosphate + NADH + H(+). It carries out the reaction sn-glycerol 3-phosphate + NADP(+) = dihydroxyacetone phosphate + NADPH + H(+). Its pathway is membrane lipid metabolism; glycerophospholipid metabolism. Its function is as follows. Catalyzes the reduction of the glycolytic intermediate dihydroxyacetone phosphate (DHAP) to sn-glycerol 3-phosphate (G3P), the key precursor for phospholipid synthesis. The sequence is that of Glycerol-3-phosphate dehydrogenase [NAD(P)+] from Caulobacter vibrioides (strain ATCC 19089 / CIP 103742 / CB 15) (Caulobacter crescentus).